The chain runs to 586 residues: Actin-related protein 9 (586 aa).

The disordered stretch occupies residues 141–169 (STPIVDKDADVDPLQRSTPDDTEPNSEEN).

The protein belongs to the actin family. ARP8 subfamily.

The polypeptide is Actin-related protein 9 (ARP9) (Oryza sativa subsp. indica (Rice)).